Reading from the N-terminus, the 159-residue chain is Ribosomal RNA large subunit methyltransferase H (159 aa).

S-adenosyl-L-methionine-binding positions include Leu-76, Gly-108, and 127–132 (FGRLTL).

It belongs to the RNA methyltransferase RlmH family. Homodimer.

Its subcellular location is the cytoplasm. It catalyses the reaction pseudouridine(1915) in 23S rRNA + S-adenosyl-L-methionine = N(3)-methylpseudouridine(1915) in 23S rRNA + S-adenosyl-L-homocysteine + H(+). Its function is as follows. Specifically methylates the pseudouridine at position 1915 (m3Psi1915) in 23S rRNA. The protein is Ribosomal RNA large subunit methyltransferase H of Streptococcus pneumoniae (strain 70585).